The sequence spans 645 residues: Alkyldihydroxyacetonephosphate synthase, peroxisomal (645 aa).

Low complexity predominate over residues 1–10 (MAEAAAGEAG). Residues 1–45 (MAEAAAGEAGASERDPDAGRARRRLRVLSGHLLGRPQEAPSTNEC) constitute a peroxisome transit peptide. Positions 1-72 (MAEAAAGEAG…AAPESGTIPK (72 aa)) are disordered. The span at 11–20 (ASERDPDAGR) shows a compositional bias: basic and acidic residues. Residues 50–69 (AASAAGASPAATPAAPESGT) are compositionally biased toward low complexity. 2 positions are modified to phosphoserine: Ser52 and Ser57. Residue Thr61 is modified to Phosphothreonine. Residue Lys89 is modified to N6-acetyllysine. Residues 189–371 (FERIPDIVVW…TEATIKIRPT (183 aa)) enclose the FAD-binding PCMH-type domain. Residues 221-227 (PIGGGTS), 290-296 (DSLEFST), and 303-306 (TRAS) contribute to the FAD site. Lys334 is subject to N6-acetyllysine. 355 to 361 (EGTLGVI) contacts FAD. Arg502 is a substrate binding site. Tyr565 acts as the Proton donor/acceptor in catalysis. Important for enzyme activity stretches follow at residues 602–604 (HHH) and 641–645 (NRNLL).

The protein belongs to the FAD-binding oxidoreductase/transferase type 4 family. As to quaternary structure, homodimer. Requires FAD as cofactor.

It localises to the peroxisome membrane. It is found in the peroxisome. The catalysed reaction is a long chain fatty alcohol + a 1-acylglycerone 3-phosphate = a 1-O-alkylglycerone 3-phosphate + a long-chain fatty acid + H(+). The enzyme catalyses hexadecan-1-ol + 1-hexadecanoylglycerone 3-phosphate = 1-O-hexadecylglycerone 3-phosphate + hexadecanoate + H(+). It catalyses the reaction 1-hexadecanoylglycerone 3-phosphate + a long-chain fatty acid = a 1-acylglycerone 3-phosphate + hexadecanoate. The protein operates within glycerolipid metabolism; ether lipid biosynthesis. Functionally, catalyzes the exchange of the acyl chain in acyl-dihydroxyacetonephosphate (acyl-DHAP) for a long chain fatty alcohol, yielding the first ether linked intermediate, i.e. alkyl-dihydroxyacetonephosphate (alkyl-DHAP), in the pathway of ether lipid biosynthesis. In Mus musculus (Mouse), this protein is Alkyldihydroxyacetonephosphate synthase, peroxisomal (Agps).